A 228-amino-acid chain; its full sequence is DNA mismatch repair protein MutH (228 aa).

It belongs to the MutH family.

Its subcellular location is the cytoplasm. Its function is as follows. Sequence-specific endonuclease that cleaves unmethylated GATC sequences. It is involved in DNA mismatch repair. The polypeptide is DNA mismatch repair protein MutH (Yersinia enterocolitica serotype O:8 / biotype 1B (strain NCTC 13174 / 8081)).